The following is a 449-amino-acid chain: Tapasin (449 aa).

The N-terminal stretch at 1–20 is a signal peptide; it reads MKPLSLLLAVASALGTAVSA. At 21 to 413 the chain is on the lumenal side; that stretch reads GPAVIECWMV…GLSGPSLEDS (393 aa). An intrachain disulfide couples Cys-27 to Cys-91. An N-linked (GlcNAc...) asparagine glycan is attached at Asn-253. In terms of domain architecture, Ig-like C1-type spans 292-399; sequence PKISLTPAPL…PTLGRSAEVT (108 aa). Cys-315 and Cys-382 form a disulfide bridge. The helical transmembrane segment at 414–434 threads the bilayer; sequence VGLFLSAFLLLGLIKALGWVA. The Cytoplasmic segment spans residues 435–449; the sequence is ASRSTSKDPKEKKAQ.

As to quaternary structure, heterodimer with PDIA3; disulfide-linked. Obligatory mediator for the interaction between newly assembled MHC class I molecules, calreticulin, PDIA3 and TAP. Up to 4 MHC class I/tapasin complexes bind to 1 TAP. Interacts with HLA-G-B2M complex; this interaction is required for loading of high affinity peptides. On its own or as part of MHC class I peptide loading complex, interacts with ligand-free MR1 or MR1-B2M complex, providing for stable MR1 pools ready for metabolite antigen processing.

Its subcellular location is the endoplasmic reticulum membrane. Its function is as follows. Involved in the association of MHC class I with transporter associated with antigen processing (TAP) and in the assembly of MHC class I with peptide (peptide loading). The polypeptide is Tapasin (TAPBP) (Canis lupus familiaris (Dog)).